The following is a 488-amino-acid chain: Cysteine--tRNA ligase (488 aa).

C28 is a Zn(2+) binding site. A 'HIGH' region motif is present at residues P30–H40. C209, H239, and E243 together coordinate Zn(2+). Positions K271 to S275 match the 'KMSKS' region motif. K274 is a binding site for ATP.

Belongs to the class-I aminoacyl-tRNA synthetase family. As to quaternary structure, monomer. Requires Zn(2+) as cofactor.

The protein resides in the cytoplasm. The catalysed reaction is tRNA(Cys) + L-cysteine + ATP = L-cysteinyl-tRNA(Cys) + AMP + diphosphate. This Helicobacter hepaticus (strain ATCC 51449 / 3B1) protein is Cysteine--tRNA ligase.